Reading from the N-terminus, the 932-residue chain is Protein translocase subunit SecA (932 aa).

ATP-binding positions include Gln87, 105 to 109 (GEGKT), and Asp515. Zn(2+) is bound by residues Cys916, Cys918, Cys927, and His928.

The protein belongs to the SecA family. As to quaternary structure, monomer and homodimer. Part of the essential Sec protein translocation apparatus which comprises SecA, SecYEG and auxiliary proteins SecDF-YajC and YidC. Zn(2+) serves as cofactor.

The protein resides in the cell inner membrane. Its subcellular location is the cytoplasm. The catalysed reaction is ATP + H2O + cellular proteinSide 1 = ADP + phosphate + cellular proteinSide 2.. Part of the Sec protein translocase complex. Interacts with the SecYEG preprotein conducting channel. Has a central role in coupling the hydrolysis of ATP to the transfer of proteins into and across the cell membrane, serving both as a receptor for the preprotein-SecB complex and as an ATP-driven molecular motor driving the stepwise translocation of polypeptide chains across the membrane. This chain is Protein translocase subunit SecA, found in Burkholderia orbicola (strain AU 1054).